Reading from the N-terminus, the 238-residue chain is Leucyl/phenylalanyl-tRNA--protein transferase (238 aa).

It belongs to the L/F-transferase family.

It localises to the cytoplasm. It carries out the reaction N-terminal L-lysyl-[protein] + L-leucyl-tRNA(Leu) = N-terminal L-leucyl-L-lysyl-[protein] + tRNA(Leu) + H(+). It catalyses the reaction N-terminal L-arginyl-[protein] + L-leucyl-tRNA(Leu) = N-terminal L-leucyl-L-arginyl-[protein] + tRNA(Leu) + H(+). The enzyme catalyses L-phenylalanyl-tRNA(Phe) + an N-terminal L-alpha-aminoacyl-[protein] = an N-terminal L-phenylalanyl-L-alpha-aminoacyl-[protein] + tRNA(Phe). Functionally, functions in the N-end rule pathway of protein degradation where it conjugates Leu, Phe and, less efficiently, Met from aminoacyl-tRNAs to the N-termini of proteins containing an N-terminal arginine or lysine. This is Leucyl/phenylalanyl-tRNA--protein transferase from Pseudoalteromonas translucida (strain TAC 125).